The chain runs to 956 residues: Glutamate receptor ionotropic, kainate 4 (956 aa).

Residues 1–20 form the signal peptide; sequence MPRVSAPLVLLPAWLLMVAC. The Extracellular portion of the chain corresponds to 21 to 545; that stretch reads SPHSLRIAAI…YFSSLDPFSP (525 aa). Asn-158, Asn-220, Asn-272, Asn-286, Asn-323, Asn-408, Asn-415, and Asn-479 each carry an N-linked (GlcNAc...) asparagine glycan. Residues Gly-500, Thr-502, and Arg-507 each contribute to the L-glutamate site. A helical transmembrane segment spans residues 546-566; it reads GVWLFMLLAYLAVSCVLFLVA. The Cytoplasmic segment spans residues 567-623; it reads RLTPYEWYSPHPCAQGRCNLLVNQYSLGNSLWFPVGGFMQQGSTIAPRALSTRCVSG. A helical transmembrane segment spans residues 624–644; that stretch reads VWWAFTLIIISSYTANLAAFL. Residues 645-804 are Extracellular-facing; sequence TVQRMEVPIE…HRAKGLGMEN (160 aa). Residues Ser-674, Ser-675, and Glu-723 each contribute to the L-glutamate site. N-linked (GlcNAc...) asparagine glycosylation is present at Asn-736. A helical membrane pass occupies residues 805–825; it reads IGGIFVVLICGLIVAIFMAML. Residues 826 to 956 lie on the Cytoplasmic side of the membrane; it reads EFLWTLRHSE…DKTTNSSEPE (131 aa). Residues 931 to 956 form a disordered region; sequence LRARPSPARSEESLEWDKTTNSSEPE. Positions 939 to 948 are enriched in basic and acidic residues; the sequence is RSEESLEWDK.

This sequence belongs to the glutamate-gated ion channel (TC 1.A.10.1) family. GRIK4 subfamily. In terms of assembly, homodimer. Can form functional heteromeric receptors with GRIK1, GRIK2 and GRIK3. In terms of tissue distribution, strong expression in hippocampal CA3 pyramidal cells. Low expression in hippocampal dentate granule cells, in layers II, V and VI of the cortex, and in cerebellar Purkinje cells. No expression in the striatum, reticular thalamus, hypothalamus or amygdaloid complex.

The protein resides in the cell membrane. Its subcellular location is the postsynaptic cell membrane. The protein localises to the presynaptic cell membrane. Ionotropic glutamate receptor that functions as a cation-permeable ligand-gated ion channel, gated by L-glutamate and the glutamatergic agonist kainic acid. Cannot form functional channels on its own and shows channel activity only in heteromeric assembly with GRIK1, GRIK2 and GRIK3 subunits. This Rattus norvegicus (Rat) protein is Glutamate receptor ionotropic, kainate 4 (Grik4).